The chain runs to 192 residues: Pyridoxal 5'-phosphate synthase subunit PdxT (192 aa).

Residue 46–48 coordinates L-glutamine; sequence GES. Residue cysteine 76 is the Nucleophile of the active site. L-glutamine is bound by residues arginine 103 and 131 to 132; that span reads IR. Catalysis depends on charge relay system residues histidine 167 and glutamate 169.

This sequence belongs to the glutaminase PdxT/SNO family. In terms of assembly, in the presence of PdxS, forms a dodecamer of heterodimers. Only shows activity in the heterodimer.

It catalyses the reaction aldehydo-D-ribose 5-phosphate + D-glyceraldehyde 3-phosphate + L-glutamine = pyridoxal 5'-phosphate + L-glutamate + phosphate + 3 H2O + H(+). It carries out the reaction L-glutamine + H2O = L-glutamate + NH4(+). The protein operates within cofactor biosynthesis; pyridoxal 5'-phosphate biosynthesis. Its function is as follows. Catalyzes the hydrolysis of glutamine to glutamate and ammonia as part of the biosynthesis of pyridoxal 5'-phosphate. The resulting ammonia molecule is channeled to the active site of PdxS. This is Pyridoxal 5'-phosphate synthase subunit PdxT from Koribacter versatilis (strain Ellin345).